A 1486-amino-acid polypeptide reads, in one-letter code: Chromosome partition protein MukB (1486 aa).

34 to 41 (GGNGAGKS) provides a ligand contact to ATP. Coiled coils occupy residues 326–418 (LEAD…QYNQ), 444–480 (LETFQAKELEATEKMLSLEQKMSMAQTAHSQFEQAYQ), and 509–603 (RHLA…RAPV). The segment at 666–783 (PGGSEDQRLN…EVPLFGRAAR (118 aa)) is flexible hinge. Coiled-coil stretches lie at residues 835–923 (EAEI…AKLE), 977–1115 (EMLS…TAKA), and 1209–1266 (VEAI…QNVS).

Belongs to the SMC family. MukB subfamily. Homodimerization via its hinge domain. Binds to DNA via its C-terminal region. Interacts, and probably forms a ternary complex, with MukE and MukF via its C-terminal region. The complex formation is stimulated by calcium or magnesium. Interacts with tubulin-related protein FtsZ.

It localises to the cytoplasm. Its subcellular location is the nucleoid. In terms of biological role, plays a central role in chromosome condensation, segregation and cell cycle progression. Functions as a homodimer, which is essential for chromosome partition. Involved in negative DNA supercoiling in vivo, and by this means organize and compact chromosomes. May achieve or facilitate chromosome segregation by condensation DNA from both sides of a centrally located replisome during cell division. The polypeptide is Chromosome partition protein MukB (Shigella boydii serotype 4 (strain Sb227)).